Here is a 194-residue protein sequence, read N- to C-terminus: Calcium-binding protein J (194 aa).

EF-hand domains follow at residues 62-97 and 98-133; these read WDKD…MTKA and PVVE…AVAC. Residues Asp75, Asp77, Asn79, Glu86, Asp111, Asp113, Ser115, His117, and Glu122 each coordinate Ca(2+).

The protein belongs to the recoverin family.

The protein is Calcium-binding protein J (cbpJ) of Dictyostelium discoideum (Social amoeba).